The chain runs to 173 residues: Alpha-crystallin A chain (173 aa).

N-acetylmethionine is present on Met-1. Positions 52 to 164 (LFRSVLESGI…SDRPIPVARE (113 aa)) constitute a sHSP domain. The Zn(2+) site is built by His-100, Glu-102, His-107, and His-154. The segment at 152–173 (TIHSDRPIPVAREEKPTSAPSS) is disordered. A compositionally biased stretch (basic and acidic residues) spans 153 to 167 (IHSDRPIPVAREEKP).

The protein belongs to the small heat shock protein (HSP20) family. Heteropolymer composed of three CRYAA and one CRYAB subunits. Inter-subunit bridging via zinc ions enhances stability, which is crucial as there is no protein turn over in the lens. Can also form homodimers and homotetramers (dimers of dimers) which serve as the building blocks of homooligomers. Within homooligomers, the zinc-binding motif is created from residues of 3 different molecules. His-100 and Glu-102 from one molecule are ligands of the zinc ion, and His-107 and His-154 residues from additional molecules complete the site with tetrahedral coordination geometry.

The protein resides in the cytoplasm. It is found in the nucleus. Functionally, contributes to the transparency and refractive index of the lens. May act as a chaperone, preventing aggregation of various proteins under a wide range of stress conditions. The protein is Alpha-crystallin A chain (CRYAA) of Alligator mississippiensis (American alligator).